Reading from the N-terminus, the 480-residue chain is Uridine 5'-monophosphate synthase (480 aa).

N-acetylalanine is present on Ala-2. Positions 2–214 (AAVGAALGPL…VFVAANHNGS (213 aa)) are OPRTase. Tyr-37 is modified (phosphotyrosine). Ser-214 bears the Phosphoserine mark. A domain linker region spans residues 215 to 220 (PLSIKE). Residues 221 to 480 (APKELSFSAR…WEAYLSRLGV (260 aa)) form an OMPdecase region. Ser-257 serves as a coordination point for orotidine 5'-phosphate. Residues Ser-257, Asp-259, and 281-283 (KTH) each bind UMP. Orotidine 5'-phosphate contacts are provided by residues Lys-281, Lys-314, Asp-317, Thr-321, Ser-372, 430–432 (QQY), and 450–451 (GR). Catalysis depends on for OMPdecase activity residues Lys-314 and Asp-317. Residues Asp-317, Thr-321, Ser-372, 430-432 (QQY), and 450-451 (GR) contribute to the UMP site.

The protein in the N-terminal section; belongs to the purine/pyrimidine phosphoribosyltransferase family. In the C-terminal section; belongs to the OMP decarboxylase family. Homodimer; dimerization is required for enzymatic activity.

It catalyses the reaction orotidine 5'-phosphate + diphosphate = orotate + 5-phospho-alpha-D-ribose 1-diphosphate. The enzyme catalyses orotidine 5'-phosphate + H(+) = UMP + CO2. Its pathway is pyrimidine metabolism; UMP biosynthesis via de novo pathway; UMP from orotate: step 1/2. The protein operates within pyrimidine metabolism; UMP biosynthesis via de novo pathway; UMP from orotate: step 2/2. Bifunctional enzyme catalyzing the last two steps of de novo pyrimidine biosynthesis, orotate phosphoribosyltransferase (OPRT), which converts orotate to orotidine-5'-monophosphate (OMP), and orotidine-5'-monophosphate decarboxylase (ODC), the terminal enzymatic reaction that decarboxylates OMP to uridine monophosphate (UMP). This chain is Uridine 5'-monophosphate synthase (UMPS), found in Pongo abelii (Sumatran orangutan).